We begin with the raw amino-acid sequence, 87 residues long: Small ribosomal subunit protein bS20 (87 aa).

The tract at residues 1-25 (MANIKSAKKRAVQSEKRRKHNASRR) is disordered.

It belongs to the bacterial ribosomal protein bS20 family.

Binds directly to 16S ribosomal RNA. In Yersinia pseudotuberculosis serotype O:1b (strain IP 31758), this protein is Small ribosomal subunit protein bS20.